Consider the following 297-residue polypeptide: Protein BCCIP homolog (297 aa).

Positions 1–40 (MSANKQKKLSTMEVDPNEDVSSSSEDDDDDEPHPDAYKGN) are disordered.

It belongs to the BCP1 family.

In Drosophila melanogaster (Fruit fly), this protein is Protein BCCIP homolog.